Here is a 455-residue protein sequence, read N- to C-terminus: Probable ATP-dependent RNA helicase DDX47 (455 aa).

Residues 1 to 10 are compositionally biased toward basic and acidic residues; the sequence is MAAPEEHDSP. The interval 1–20 is disordered; it reads MAAPEEHDSPTEASQPIVEE. Residue alanine 2 is modified to N-acetylalanine. At serine 9 the chain carries Phosphoserine. The Q motif motif lies at 24 to 52; sequence KTFKDLGVTDVLCEACDQLGWTKPTKIQI. The Helicase ATP-binding domain maps to 55 to 226; that stretch reads IPLALQGRDI…RAALKNPVKC (172 aa). Residue 68 to 75 coordinates ATP; it reads AETGSGKT. Threonine 149 is subject to Phosphothreonine. The DEAD box signature appears at 174–177; that stretch reads DEAD. The Helicase C-terminal domain occupies 237 to 397; that stretch reads KLQQYYIFIP…GFPTQDDEVM (161 aa). The segment covering 413–428 has biased composition (basic and acidic residues); it reads ELREHGEKKKRSREDA. A disordered region spans residues 413-455; sequence ELREHGEKKKRSREDAGDNDDTEGAIGVRNKVAGGKMKKRKGR. Serine 424 is modified (phosphoserine).

This sequence belongs to the DEAD box helicase family. DDX47/RRP3 subfamily. In terms of assembly, interacts with AGO1 and AGO2. Interacts with GABARAP. Interacts with NOL8; the interaction is RNA-dependent. As to expression, expressed in skin, lung and breast. Also expressed in the brain.

The protein resides in the nucleus. Its subcellular location is the nucleolus. It catalyses the reaction ATP + H2O = ADP + phosphate + H(+). Its function is as follows. Required for efficient ribosome biogenesis. May have a role in mRNA splicing. Involved in apoptosis. The chain is Probable ATP-dependent RNA helicase DDX47 (DDX47) from Homo sapiens (Human).